Reading from the N-terminus, the 614-residue chain is MSTLKKISDEDRESKFGYVFAVSGPVVTAERMSGSAMYELVRVGYYELVGEIIRLEGDMATIQVYEETSGVTVGDPVLRTGKPLSVELGPGIMGSIFDGIQRPLKDINELTSSIYIPKGVNIPCLSRTQSWGFNPLNVKVGSHITGGDLYGLVHENTLVKHKLLVPPRAKGTVRYIAPPGNYTVDDIILETEFDGEINKWSMLQVWPVRQPRPVTEKLPANHPLLTGQRVLDSLFPCVQGGTTAIPGAFGCGKTVISQALSKYSNSDVIIYVGCGERGNEMSEVLRDFPELSVEIDGVTESIMKRTALVANTSNMPVAAREASIYTGITLSEYFRDMGYNVSMMADSTSRWAEALREISGRLAEMPADSGYPAYLGARLASFYERAGRVKCLGNPEREGSVSIVGAVSPPGGDFSDPVTSATLGIVQVFWGLDKKLAQRKHFPSINWLISYSKYMRALDDFYDKNFQEFVPLRTKVKEILQEEEDLSEIVQLVGKASLAETDKITLEVAKLLKDDFLQQNSYSAYDRFCPFYKTVGMLRNMIGFYDMARHAVETTAQSENKITWNVIRDSMGNILYQLSSMKFKDPVKDGEAKIKADFDQLYEDLQQAFRNLED.

247-254 (GAFGCGKT) contacts ATP.

The protein belongs to the ATPase alpha/beta chains family. V-ATPase is a heteromultimeric enzyme made up of two complexes: the ATP-hydrolytic V1 complex and the proton translocation V0 complex. The V1 complex consists of three catalytic AB heterodimers that form a heterohexamer, three peripheral stalks each consisting of EG heterodimers, one central rotor including subunits D and F, and the regulatory subunits C and H. The proton translocation complex V0 consists of the proton transport subunit a, a ring of proteolipid subunits c9c'', rotary subunit d, subunits e and f, and the accessory subunits VhaAC45 and ATP6AP2.

The enzyme catalyses ATP + H2O + 4 H(+)(in) = ADP + phosphate + 5 H(+)(out). With respect to regulation, ATP hydrolysis occurs at the interface between the nucleotide-binding domains of subunits A and B. ATP hydrolysis triggers a conformational change in the subunits D and F, which induces a shift of subunit d. The c-ring is subsequently rotated and results in a continuous proton translocation across the membrane. Functionally, catalytic subunit of the V1 complex of vacuolar(H+)-ATPase (V-ATPase), a multisubunit enzyme composed of a peripheral complex (V1) that hydrolyzes ATP and a membrane integral complex (V0) that translocates protons. V-ATPase is responsible for acidifying and maintaining the pH of intracellular compartments and in some cell types, is targeted to the plasma membrane, where it is responsible for acidifying the extracellular environment. This Aedes aegypti (Yellowfever mosquito) protein is V-type proton ATPase catalytic subunit A (VhaA).